The sequence spans 434 residues: Histidinol dehydrogenase (434 aa).

Residues tyrosine 130, glutamine 188, and asparagine 211 each coordinate NAD(+). Serine 237, glutamine 259, and histidine 262 together coordinate substrate. Zn(2+)-binding residues include glutamine 259 and histidine 262. Active-site proton acceptor residues include glutamate 326 and histidine 327. Histidine 327, aspartate 360, glutamate 414, and histidine 419 together coordinate substrate. Residue aspartate 360 participates in Zn(2+) binding. Residue histidine 419 coordinates Zn(2+).

This sequence belongs to the histidinol dehydrogenase family. In terms of assembly, homodimer. Zn(2+) serves as cofactor.

It carries out the reaction L-histidinol + 2 NAD(+) + H2O = L-histidine + 2 NADH + 3 H(+). Its pathway is amino-acid biosynthesis; L-histidine biosynthesis; L-histidine from 5-phospho-alpha-D-ribose 1-diphosphate: step 9/9. Functionally, catalyzes the sequential NAD-dependent oxidations of L-histidinol to L-histidinaldehyde and then to L-histidine. This chain is Histidinol dehydrogenase, found in Shigella sonnei (strain Ss046).